Consider the following 396-residue polypeptide: MTLLNPYFGEFGGQYVPQILMPALKQLEEAFVSAQRDPEFQAEFIDLLKNYAGRPTALTLCRNLTAGTKTKLYLKREDLLHGGAHKTNQVLGQALLAKRMGKTEIIAETGAGQHGVASALACALLGLKCRIYMGAKDIERQSPNVFRMRLMGAEVIPVHSGSSTLKDACNEALRDWSGSYETAHYMLGTAAGPHPYPTIVREFQRMIGEETKAQMLEREGRLPDAVLACVGGGSNAIGMFADFIDDTSVGLIGVEPAGLGIETGQHGAPLKHGHVGIYFGMKAPMMQTSEGQIEESYSISAGLDFPSVGPQHAYLNSIGRAEYVSITDDEALDAFKALSRSEGIIPALESSHALAHALKMIRETPQKEQILVVNLSGRGDKDIFTVHDILKARGEI.

At Lys-86 the chain carries N6-(pyridoxal phosphate)lysine.

This sequence belongs to the TrpB family. As to quaternary structure, tetramer of two alpha and two beta chains. Requires pyridoxal 5'-phosphate as cofactor.

The catalysed reaction is (1S,2R)-1-C-(indol-3-yl)glycerol 3-phosphate + L-serine = D-glyceraldehyde 3-phosphate + L-tryptophan + H2O. The protein operates within amino-acid biosynthesis; L-tryptophan biosynthesis; L-tryptophan from chorismate: step 5/5. Functionally, the beta subunit is responsible for the synthesis of L-tryptophan from indole and L-serine. This chain is Tryptophan synthase beta chain, found in Serratia proteamaculans (strain 568).